A 340-amino-acid polypeptide reads, in one-letter code: Annexin A2-A (340 aa).

The P10 binding site stretch occupies residues 2–25 (ALIHEILGKLSLEGNQSCARQSAL). Annexin repeat units follow at residues 34 to 105 (FDAE…GLIK), 106 to 177 (TRPQ…ALAK), 190 to 262 (EKID…NLVQ), and 266 to 337 (NKPL…NLCG).

The protein belongs to the annexin family. Tetramer of 2 light chains (p10 proteins) and 2 heavy chains (p36 proteins).

The protein localises to the secreted. Its subcellular location is the extracellular space. It is found in the extracellular matrix. It localises to the basement membrane. In terms of biological role, calcium-regulated membrane-binding protein whose affinity for calcium is greatly enhanced by anionic phospholipids. It binds two calcium ions with high affinity. The polypeptide is Annexin A2-A (anxa2-a) (Xenopus laevis (African clawed frog)).